Consider the following 545-residue polypeptide: Phenylalanine--tRNA ligase beta subunit (545 aa).

The B5 domain maps to 270-346; that stretch reads LEPKERLLTT…KGYGYENIKV (77 aa). Mg(2+) is bound by residues Asp-324, Asp-330, Glu-333, and Asp-334.

This sequence belongs to the phenylalanyl-tRNA synthetase beta subunit family. Type 2 subfamily. As to quaternary structure, tetramer of two alpha and two beta subunits. It depends on Mg(2+) as a cofactor.

It localises to the cytoplasm. It carries out the reaction tRNA(Phe) + L-phenylalanine + ATP = L-phenylalanyl-tRNA(Phe) + AMP + diphosphate + H(+). The chain is Phenylalanine--tRNA ligase beta subunit from Methanosarcina acetivorans (strain ATCC 35395 / DSM 2834 / JCM 12185 / C2A).